A 921-amino-acid chain; its full sequence is MADQNTPGDKKLGVPSKTLTLKPRVETGTVRQSFPHGRSKQVVVEKRGTKRRVGDGAPDAPHAPEPTVAKAPPPPPPSNRPSGPRPSGGQQRGGSGVVLRTLTEDERSARASALADARVRDLEERRQAEEEARRRAEREAAERAEREAAEARRKAEEERHRHEEEAKRKAELEAKKRFGEGEAPRPAAAAPQPTVSAPARPAQAPGRPQGAPGSRPQQIGGPSSRPGGSQPGGARPAGPRPAGGGPLGRAPAAVAAGPDEDEGPRQIRRGPGGAARPAPPPKTTHKPGPQKQRGRLTVVTALNADDVRERSIASFRRRTQRLKGHAANEQKEKLVREVTIPEAITIQELANRMSERAVDVIRLLMRQGAMHKITDVIDADTAQLIAEELGHTVKRVAASDVEEGLFDVVDDSTDTEPRSPVVTVMGHVDHGKTSLLDALRHANVVSGEAGGITQHIGAYQVTAPDSGKKITFIDTPGHAAFTAMRARGAKVTDIVVLVVAADDGVMPQTIEAINHAKAAKVPMIVAINKIDKPDARPERVRTELLQHEVQVESLGGDVVDVEVSAKNKTNLDRLLEMIALQADILDLKTNSDRPAEGTVIEAKLDRGRGPVATVLVQRGTLRVGDIIVAGAEMGRVRALISDQGETLQEAGPSVPVEVLGFNGPPEAGDRLAVVENEARARQVTSYRAHQKRENAAASISGMRGSLEQMMSQLKTAGRKEFPLVIKADVQGSLEAILGSLEKLGTEEVAARILHAGVGGISESDVTLAEGFNAAIIGFSVRANKEAAALAKRNGIEIRYYNIIYDLVDDVKKAMSGLLAPTLRETMLGNAQILEVFNISKVGKVAGCRVTDGTVERGANVRLIRDNVVVHEGKLSTLKRFKDEVKDVQAGQECGMAFENYGDMRVGDVIECYRVETIQRSL.

The tract at residues 1 to 296 is disordered; it reads MADQNTPGDK…PGPQKQRGRL (296 aa). Positions 80–89 are enriched in low complexity; that stretch reads RPSGPRPSGG. A compositionally biased stretch (basic and acidic residues) spans 117-183; it reads ARVRDLEERR…AKKRFGEGEA (67 aa). Composition is skewed to low complexity over residues 184–237 and 248–257; these read PRPA…ARPA and GRAPAAVAAG. The region spanning 417–586 is the tr-type G domain; the sequence is PRSPVVTVMG…MIALQADILD (170 aa). The tract at residues 426-433 is G1; that stretch reads GHVDHGKT. Residue 426–433 participates in GTP binding; the sequence is GHVDHGKT. Residues 451-455 are G2; the sequence is GITQH. Residues 474–477 are G3; that stretch reads DTPG. Residues 474–478 and 528–531 each bind GTP; these read DTPGH and NKID. Residues 528 to 531 form a G4 region; the sequence is NKID. Residues 564–566 form a G5 region; that stretch reads SAK.

It belongs to the TRAFAC class translation factor GTPase superfamily. Classic translation factor GTPase family. IF-2 subfamily.

The protein localises to the cytoplasm. In terms of biological role, one of the essential components for the initiation of protein synthesis. Protects formylmethionyl-tRNA from spontaneous hydrolysis and promotes its binding to the 30S ribosomal subunits. Also involved in the hydrolysis of GTP during the formation of the 70S ribosomal complex. The polypeptide is Translation initiation factor IF-2 (Bradyrhizobium sp. (strain ORS 278)).